We begin with the raw amino-acid sequence, 173 residues long: Photosystem I assembly protein Ycf3 (173 aa).

TPR repeat units lie at residues 35–68 (AYVY…EESP), 72–105 (SETL…NSNQ), and 120–153 (GRTA…YPGG).

This sequence belongs to the Ycf3 family.

Its subcellular location is the cellular thylakoid membrane. In terms of biological role, essential for the assembly of the photosystem I (PSI) complex. May act as a chaperone-like factor to guide the assembly of the PSI subunits. The chain is Photosystem I assembly protein Ycf3 from Prochlorococcus marinus (strain MIT 9313).